Reading from the N-terminus, the 390-residue chain is tRNA (guanine(9)-N1)-methyltransferase (390 aa).

The interval 1–72 (MDIDEESYLN…RTAQLAEGYA (72 aa)) is disordered. A compositionally biased stretch (basic and acidic residues) spans 43–59 (ARLEEIKPLKRAAERER). Residues 92–340 (KERKEAQRRI…AVIPIRKYAP (249 aa)) enclose the SAM-dependent MTase TRM10-type domain. S-adenosyl-L-methionine-binding positions include 246-247 (LS), Gly-266, 270-274 (DRNRH), Cys-278, Leu-292, and 305-307 (KVL). Residue Asp-270 is the Proton acceptor of the active site. Positions 343–390 (KTKRAKTETKRNEKEEEEVECTSAEGEEDIGVIEESAEVDPEDVFSNQ) are disordered. The segment covering 347 to 356 (AKTETKRNEK) has biased composition (basic and acidic residues). A compositionally biased stretch (acidic residues) spans 357-390 (EEEEVECTSAEGEEDIGVIEESAEVDPEDVFSNQ).

This sequence belongs to the class IV-like SAM-binding methyltransferase superfamily. TRM10 family. In terms of assembly, monomer.

It localises to the cytoplasm. The protein resides in the nucleus. The enzyme catalyses guanosine(9) in tRNA + S-adenosyl-L-methionine = N(1)-methylguanosine(9) in tRNA + S-adenosyl-L-homocysteine + H(+). In terms of biological role, S-adenosyl-L-methionine-dependent guanine N(1)-methyltransferase that catalyzes the formation of N(1)-methylguanine at position 9 (m1G9) in cytoplasmic tRNA. In Cryptococcus neoformans var. neoformans serotype D (strain JEC21 / ATCC MYA-565) (Filobasidiella neoformans), this protein is tRNA (guanine(9)-N1)-methyltransferase.